We begin with the raw amino-acid sequence, 199 residues long: Elongation factor Ts (199 aa).

An involved in Mg(2+) ion dislocation from EF-Tu region spans residues 82–85; sequence TDFV.

The protein belongs to the EF-Ts family.

It is found in the cytoplasm. In terms of biological role, associates with the EF-Tu.GDP complex and induces the exchange of GDP to GTP. It remains bound to the aminoacyl-tRNA.EF-Tu.GTP complex up to the GTP hydrolysis stage on the ribosome. This Leptospira interrogans serogroup Icterohaemorrhagiae serovar copenhageni (strain Fiocruz L1-130) protein is Elongation factor Ts.